The following is a 310-amino-acid chain: 4-hydroxyproline 2-epimerase (310 aa).

Residue Cys-88 is the Proton acceptor of the active site. Substrate-binding positions include 89–90 (GH), His-208, and Asp-232. Residue Cys-236 is the Proton donor of the active site. 237–238 (GT) is a binding site for substrate.

The protein belongs to the proline racemase family.

The enzyme catalyses trans-4-hydroxy-L-proline = cis-4-hydroxy-D-proline. In terms of biological role, catalyzes the epimerization of trans-4-hydroxy-L-proline (t4LHyp) to cis-4-hydroxy-D-proline (c4DHyp). Is likely involved in a degradation pathway that converts t4LHyp to alpha-ketoglutarate. Displays no proline racemase activity. This Acinetobacter baumannii (strain ATCC 17978 / DSM 105126 / CIP 53.77 / LMG 1025 / NCDC KC755 / 5377) protein is 4-hydroxyproline 2-epimerase.